The following is a 355-amino-acid chain: NAD-dependent protein deacylase sirtuin-6 (355 aa).

At Ser2 the chain carries N-acetylserine. Phosphoserine is present on Ser10. Positions 27–272 (PEELERKVWE…TRLMKHLGLE (246 aa)) constitute a Deacetylase sirtuin-type domain. Position 33 is an N6-acetyllysine (Lys33). Residues Ala53, Thr57, Phe64, Arg65, Trp71, Gln113, and His133 each contribute to the NAD(+) site. Catalysis depends on His133, which acts as the Proton acceptor. The Zn(2+) site is built by Cys141, Cys144, and Cys166. Lys170 participates in a covalent cross-link: Glycyl lysine isopeptide (Lys-Gly) (interchain with G-Cter in ubiquitin). Position 177 (Cys177) interacts with Zn(2+). Gly214, Ser216, Asn240, Gln242, and Val258 together coordinate NAD(+). A disordered region spans residues 284–355 (RALPPLPRPP…KRVKAEAVPS (72 aa)). Residues 287–296 (PPLPRPPTPK) show a composition bias toward pro residues. Thr294 carries the phosphothreonine modification. A phosphoserine mark is found at Ser303 and Ser330.

Belongs to the sirtuin family. Class IV subfamily. In terms of assembly, homodimer; binds to nucleosomes and DNA ends as a homodimer. Interacts with RELA; interferes with RELA binding to target DNA. Interacts with SMARCA5; promoting recruitment of SMARCA5/SNF2H to double-strand breaks (DSBs) sites. Interacts with the mTORC2 complex; preventing the ability of SIRT6 to deacetylate FOXO1. Interacts with the CLOCK-BMAL1 complex; recruited by the CLOCK-BMAL1 complex to regulate expression of clock-controlled genes. Interacts with CSNK2A2; preventing CSNK2A2 localization to the nucleus. In terms of processing, acetylated at Lys-33. Deacetylation at Lys-33 by SIRT1 promotes homomultimerization and binding to double-strand breaks (DSBs) sites. Post-translationally, phosphorylation at Ser-10 by MAPK8/JNK1 in response to oxidative stress stimulates the mono-ADP-ribosyltransferase activity on PARP1, leading to PARP1 recruitment to double-strand breaks (DSBs). Monoubiquitinated at Lys-170 by STUB1/CHIP, preventing its degradation by the proteasome. In terms of processing, sumoylated, leading to specifically decrease ability to deacetylate histone H3 at 'Lys-56' (H3K56ac).

The protein resides in the nucleus. Its subcellular location is the chromosome. The protein localises to the telomere. It is found in the endoplasmic reticulum. The enzyme catalyses N(6)-acetyl-L-lysyl-[protein] + NAD(+) + H2O = 2''-O-acetyl-ADP-D-ribose + nicotinamide + L-lysyl-[protein]. The catalysed reaction is N(6)-tetradecanoyl-L-lysyl-[protein] + NAD(+) + H2O = 2''-O-tetradecanoyl-ADP-D-ribose + nicotinamide + L-lysyl-[protein]. It carries out the reaction N(6)-hexadecanoyl-L-lysyl-[protein] + NAD(+) + H2O = 2''-O-hexadecanoyl-ADP-D-ribose + nicotinamide + L-lysyl-[protein]. It catalyses the reaction L-lysyl-[protein] + NAD(+) = N(6)-(ADP-D-ribosyl)-L-lysyl-[protein] + nicotinamide + H(+). The enzyme catalyses L-arginyl-[protein] + NAD(+) = N(omega)-(ADP-D-ribosyl)-L-arginyl-[protein] + nicotinamide + H(+). With respect to regulation, compared to the defatty-acylase activity, the protein deacetylase activity is weak in vitro, and requires activation. The histone deacetylase activity is strongly activated upon binding to nucleosomes and chromatin in vivo. Two molecules of SIRT6 associate with the acidic patch of one nucleosome, while the C-terminal disordered region of SIRT6 associates with nucleosomal DNA, leading to efficient histone deacetylation. The protein-lysine deacetylase activity is also activated by long-chain free fatty-acids. NAD-dependent protein deacetylase, deacylase and mono-ADP-ribosyltransferase that plays an essential role in DNA damage repair, telomere maintenance, metabolic homeostasis, inflammation, tumorigenesis and aging. Displays protein-lysine deacetylase or defatty-acylase (demyristoylase and depalmitoylase) activity, depending on the context. Acts as a key histone deacetylase by catalyzing deacetylation of histone H3 at 'Lys-9', 'Lys-18' and 'Lys-56' (H3K9ac, H3K18ac and H3K56ac, respectively), suppressing target gene expression of several transcription factors, including NF-kappa-B. Acts as an inhibitor of transcription elongation by mediating deacetylation of H3K9ac and H3K56ac, preventing release of NELFE from chromatin and causing transcriptional pausing. Involved in DNA repair by promoting double-strand break (DSB) repair: acts as a DSB sensor by recognizing and binding DSB sites, leading to (1) recruitment of DNA repair proteins, such as SMARCA5/SNF2H, and (2) deacetylation of histone H3K9ac and H3K56ac. SIRT6 participation to DSB repair is probably involved in extension of life span. Also promotes DNA repair by deacetylating non-histone proteins, such as DDB2 and p53/TP53. Specifically deacetylates H3K18ac at pericentric heterochromatin, thereby maintaining pericentric heterochromatin silencing at centromeres and protecting against genomic instability and cellular senescence. Involved in telomere maintenance by catalyzing deacetylation of histone H3 in telomeric chromatin, regulating telomere position effect and telomere movement in response to DNA damage. Required for embryonic stem cell differentiation by mediating histone deacetylation of H3K9ac. Plays a major role in metabolism by regulating processes such as glycolysis, gluconeogenesis, insulin secretion and lipid metabolism. Inhibits glycolysis via histone deacetylase activity and by acting as a corepressor of the transcription factor HIF1A, thereby controlling the expression of multiple glycolytic genes. Has tumor suppressor activity by repressing glycolysis, thereby inhibiting the Warburg effect. Also regulates glycolysis and tumorigenesis by mediating deacetylation and nuclear export of non-histone proteins, such as isoform M2 of PKM (PKM2). Acts as a negative regulator of gluconeogenesis by mediating deacetylation of non-histone proteins, such as FOXO1 and KAT2A/GCN5. Promotes beta-oxidation of fatty acids during fasting by catalyzing deacetylation of NCOA2, inducing coactivation of PPARA. Acts as a regulator of lipid catabolism in brown adipocytes, both by catalyzing deacetylation of histones and non-histone proteins, such as FOXO1. Also acts as a regulator of circadian rhythms, both by regulating expression of clock-controlled genes involved in lipid and carbohydrate metabolism, and by catalyzing deacetylation of PER2. The defatty-acylase activity is specifically involved in regulation of protein secretion. Has high activity toward long-chain fatty acyl groups and mediates protein-lysine demyristoylation and depalmitoylation of target proteins, such as RRAS2 and TNF, thereby regulating their secretion. Also acts as a mono-ADP-ribosyltransferase by mediating mono-ADP-ribosylation of PARP1, TRIM28/KAP1 or SMARCC2/BAF170. Mono-ADP-ribosyltransferase activity is involved in DNA repair, cellular senescence, repression of LINE-1 retrotransposon elements and regulation of transcription. This Macaca fascicularis (Crab-eating macaque) protein is NAD-dependent protein deacylase sirtuin-6.